We begin with the raw amino-acid sequence, 298 residues long: UDP-N-acetylenolpyruvoylglucosamine reductase (298 aa).

The FAD-binding PCMH-type domain occupies 26-191 (KTGGEAEYLA…LSATFSLKPG (166 aa)). Arg-170 is a catalytic residue. The active-site Proton donor is Ser-220. Glu-290 is a catalytic residue.

It belongs to the MurB family. The cofactor is FAD.

The protein localises to the cytoplasm. The catalysed reaction is UDP-N-acetyl-alpha-D-muramate + NADP(+) = UDP-N-acetyl-3-O-(1-carboxyvinyl)-alpha-D-glucosamine + NADPH + H(+). Its pathway is cell wall biogenesis; peptidoglycan biosynthesis. Cell wall formation. The chain is UDP-N-acetylenolpyruvoylglucosamine reductase from Lactobacillus acidophilus (strain ATCC 700396 / NCK56 / N2 / NCFM).